Here is a 337-residue protein sequence, read N- to C-terminus: Methionyl-tRNA formyltransferase (337 aa).

110 to 113 (SLLP) is a binding site for (6S)-5,6,7,8-tetrahydrofolate.

It belongs to the Fmt family.

It catalyses the reaction L-methionyl-tRNA(fMet) + (6R)-10-formyltetrahydrofolate = N-formyl-L-methionyl-tRNA(fMet) + (6S)-5,6,7,8-tetrahydrofolate + H(+). Functionally, attaches a formyl group to the free amino group of methionyl-tRNA(fMet). The formyl group appears to play a dual role in the initiator identity of N-formylmethionyl-tRNA by promoting its recognition by IF2 and preventing the misappropriation of this tRNA by the elongation apparatus. This chain is Methionyl-tRNA formyltransferase, found in Frankia casuarinae (strain DSM 45818 / CECT 9043 / HFP020203 / CcI3).